Reading from the N-terminus, the 723-residue chain is Catalase-peroxidase (723 aa).

The segment at residues 97 to 225 is a cross-link (tryptophyl-tyrosyl-methioninium (Trp-Tyr) (with M-251)); it reads WHAAGSYRVT…LAAVQMGLIY (129 aa). His-98 acts as the Proton acceptor in catalysis. The segment at residues 225-251 is a cross-link (tryptophyl-tyrosyl-methioninium (Tyr-Met) (with W-97)); sequence YVNPEGVNGKSDPLATAAQMRETFARM. His-266 lines the heme b pocket.

This sequence belongs to the peroxidase family. Peroxidase/catalase subfamily. As to quaternary structure, homodimer or homotetramer. It depends on heme b as a cofactor. Formation of the three residue Trp-Tyr-Met cross-link is important for the catalase, but not the peroxidase activity of the enzyme.

The catalysed reaction is H2O2 + AH2 = A + 2 H2O. It catalyses the reaction 2 H2O2 = O2 + 2 H2O. In terms of biological role, bifunctional enzyme with both catalase and broad-spectrum peroxidase activity. This chain is Catalase-peroxidase, found in Agrobacterium fabrum (strain C58 / ATCC 33970) (Agrobacterium tumefaciens (strain C58)).